A 593-amino-acid chain; its full sequence is Copine-5 (593 aa).

The C2 1 domain occupies Glu-2 to Leu-134. Residue Ser-19 is modified to Phosphoserine. Ca(2+) contacts are provided by Asp-38, Asp-44, Asp-98, Asp-100, Ser-103, Lys-108, and Asp-110. Residue Ser-103 is modified to Phosphoserine. A Phosphoserine modification is found at Ser-140. One can recognise a C2 2 domain in the interval Lys-161–Tyr-284. The Ca(2+) site is built by Asp-192, Asp-198, Asp-254, Asp-256, and Asp-262. A VWFA domain is found at Asn-328–Leu-554. Positions Gly-562 to Ile-593 are disordered. A compositionally biased stretch (low complexity) spans Pro-572–Ala-581.

It belongs to the copine family. Ca(2+) is required as a cofactor. As to expression, expressed in the brain, heart, stomach, spleen, lymph node and testis. Expressed in melanocytes.

The protein resides in the perikaryon. It localises to the cell projection. Its function is as follows. Probable calcium-dependent phospholipid-binding protein that may play a role in calcium-mediated intracellular processes. Plays a role in dendrite formation by melanocytes. The polypeptide is Copine-5 (Homo sapiens (Human)).